We begin with the raw amino-acid sequence, 197 residues long: dITP/XTP pyrophosphatase (197 aa).

Position 8–13 (8–13 (TGNQGK)) interacts with substrate. Asp-69 serves as the catalytic Proton acceptor. A Mg(2+)-binding site is contributed by Asp-69. Substrate is bound by residues Ser-70, 154–157 (FGYD), Lys-177, and 182–183 (HR).

It belongs to the HAM1 NTPase family. In terms of assembly, homodimer. It depends on Mg(2+) as a cofactor.

It catalyses the reaction XTP + H2O = XMP + diphosphate + H(+). It carries out the reaction dITP + H2O = dIMP + diphosphate + H(+). The enzyme catalyses ITP + H2O = IMP + diphosphate + H(+). Its function is as follows. Pyrophosphatase that catalyzes the hydrolysis of nucleoside triphosphates to their monophosphate derivatives, with a high preference for the non-canonical purine nucleotides XTP (xanthosine triphosphate), dITP (deoxyinosine triphosphate) and ITP. Seems to function as a house-cleaning enzyme that removes non-canonical purine nucleotides from the nucleotide pool, thus preventing their incorporation into DNA/RNA and avoiding chromosomal lesions. The protein is dITP/XTP pyrophosphatase of Photobacterium profundum (strain SS9).